Reading from the N-terminus, the 214-residue chain is MALRSLSKIDQLLLGVDKALRAVVPHSNPSTRPLPVSSDEIPELSITESRHVAGLMRINHTGEVCAQGLYHGQAFTAKDNSVKRAMQQSAEEEVDHLVWCETRLSELGSHPSVFTPLWYGMSFGLGAVAGAISNEFSLGFVAETEAQVSEHLQDHIGQLPPQDQRSKEILAQMDSEELHHRELALANGGAALSPLMRHTMRWMANRMKATAYHF.

Fe cation contacts are provided by Glu-63, Glu-93, His-96, Glu-145, Glu-177, and His-180.

This sequence belongs to the COQ7 family. Fe cation serves as cofactor.

The protein localises to the cell membrane. The catalysed reaction is a 5-methoxy-2-methyl-3-(all-trans-polyprenyl)benzene-1,4-diol + AH2 + O2 = a 3-demethylubiquinol + A + H2O. It participates in cofactor biosynthesis; ubiquinone biosynthesis. Catalyzes the hydroxylation of 2-nonaprenyl-3-methyl-6-methoxy-1,4-benzoquinol during ubiquinone biosynthesis. This Psychrobacter cryohalolentis (strain ATCC BAA-1226 / DSM 17306 / VKM B-2378 / K5) protein is 3-demethoxyubiquinol 3-hydroxylase.